Reading from the N-terminus, the 963-residue chain is Iron-responsive element-binding protein 2 (963 aa).

[4Fe-4S] cluster contacts are provided by C512, C578, and C581.

The protein belongs to the aconitase/IPM isomerase family. As to quaternary structure, interacts with RBCK1 only in iron-rich conditions. Interacts (when associated with the 4Fe-4S) with FBXL5. Interacts with CIAO1 and CIAO2A. Requires [4Fe-4S] cluster as cofactor. In terms of processing, ubiquitinated and degraded by the proteasome in presence of high level of iron and oxygen. Ubiquitinated by a SCF complex containing FBXL5. Upon iron and oxygen depletion FBXL5 is degraded, preventing ubiquitination and allowing its RNA-binding activity.

It is found in the cytoplasm. In terms of biological role, RNA-binding protein that binds to iron-responsive elements (IRES), which are stem-loop structures found in the 5'-UTR of ferritin, and delta aminolevulinic acid synthase mRNAs, and in the 3'-UTR of transferrin receptor mRNA. Binding to the IRE element in ferritin results in the repression of its mRNA translation. Binding of the protein to the transferrin receptor mRNA inhibits the degradation of this otherwise rapidly degraded mRNA. The polypeptide is Iron-responsive element-binding protein 2 (Ireb2) (Mus musculus (Mouse)).